The primary structure comprises 879 residues: Phosphoenolpyruvate carboxylase (879 aa).

Residues His-138 and Lys-546 contribute to the active site.

This sequence belongs to the PEPCase type 1 family. Mg(2+) serves as cofactor.

It catalyses the reaction oxaloacetate + phosphate = phosphoenolpyruvate + hydrogencarbonate. Forms oxaloacetate, a four-carbon dicarboxylic acid source for the tricarboxylic acid cycle. The sequence is that of Phosphoenolpyruvate carboxylase from Pectobacterium carotovorum subsp. carotovorum (strain PC1).